The primary structure comprises 782 residues: Pyridoxal-dependent decarboxylase domain-containing protein 1 (782 aa).

The span at 26 to 48 (ILEDNQRPSEEEKDGKKYTRKDI) shows a compositional bias: basic and acidic residues. 4 disordered regions span residues 26–56 (ILED…QGSG), 673–695 (QTTG…AGQK), 702–721 (RNSD…EVES), and 726–782 (PMPE…DSLR). Composition is skewed to polar residues over residues 703–714 (NSDAMSETSSIS) and 747–782 (AEQS…DSLR).

The protein belongs to the group II decarboxylase family. The cofactor is pyridoxal 5'-phosphate.

This Xenopus laevis (African clawed frog) protein is Pyridoxal-dependent decarboxylase domain-containing protein 1 (pdxdc1).